The sequence spans 258 residues: 6-carboxyhexanoate--CoA ligase (258 aa).

It belongs to the BioW family. Homodimer. The cofactor is Mg(2+).

The enzyme catalyses heptanedioate + ATP + CoA = 6-carboxyhexanoyl-CoA + AMP + diphosphate. It participates in metabolic intermediate metabolism; pimeloyl-CoA biosynthesis; pimeloyl-CoA from pimelate: step 1/1. In terms of biological role, catalyzes the transformation of pimelate into pimeloyl-CoA with concomitant hydrolysis of ATP to AMP. The protein is 6-carboxyhexanoate--CoA ligase of Bacillus spizizenii (strain ATCC 23059 / NRRL B-14472 / W23) (Bacillus subtilis subsp. spizizenii).